Here is a 220-residue protein sequence, read N- to C-terminus: Ribosome maturation factor RimP (220 aa).

Residues 1-15 are compositionally biased toward low complexity; the sequence is MSQRGRATRPTGPTG. Disordered regions lie at residues 1 to 35 and 184 to 220; these read MSQR…GGDL and PGRV…GEER. Acidic residues predominate over residues 198-220; the sequence is DGADGADEAGDFDDDDDVEGEER.

It belongs to the RimP family.

Its subcellular location is the cytoplasm. Its function is as follows. Required for maturation of 30S ribosomal subunits. The chain is Ribosome maturation factor RimP from Salinispora tropica (strain ATCC BAA-916 / DSM 44818 / JCM 13857 / NBRC 105044 / CNB-440).